The primary structure comprises 228 residues: Woronin body membrane protein wscA (228 aa).

The next 4 membrane-spanning stretches (helical) occupy residues 89–109, 130–150, 162–182, and 185–205; these read MTLYGMFISAPLGHLLVGILQ, LIVSPIQNAVYLMSMAIIAGA, AGFMPVMKVSWITSPLALAFA, and FLPEHTWVPFFNIIGFFIGTY.

Belongs to the peroxisomal membrane protein PXMP2/4 family. Self-assembles into detergent-resistant oligomers and forms a complex with hexA assemblies.

The protein resides in the peroxisome membrane. It localises to the cell septum. In terms of biological role, woronin sorting complex protein involved in both Woronin bodies (WB) formation and inherence. Localizes to large peroxisome membranes where it self-assembles into detergent-resistant oligomers that envelop hex-1 assemblies, producing asymmetrical nascent WBs. These structures are then delivered to the cell cortex, which permits partitioning of the nascent WB and WB inheritance. The protein is Woronin body membrane protein wscA of Aspergillus fumigatus (strain ATCC MYA-4609 / CBS 101355 / FGSC A1100 / Af293) (Neosartorya fumigata).